Consider the following 501-residue polypeptide: MTEQTQDENKLIAERRAKLEHIRTNCPANGHPNNFDRKHKAADIQAEFGHNTKEELEGMGIERSIAGRVMAKRGPFLVIQDVSGRIQAYAGKDVQKDLKEKFQGLDIGDIIGVTGQLHLSGKGDLYVNMEEYQLLTKALRPLPEKFHGLTDQETRYRQRYVDLIVNEQSREAFIMRSKVVSAIRNFMVKKEFMEVETPMMHSIPGGASARPFATHHNALDIAMYLRIAPELYLKRLVVGGFERVFEINRNFRNEGLSPRHNPEFTMMEFYMAYADFNDLMDLTEEMLSSIATELCGSPQLPYGEHTVDFGGPYARLSMLDAIKKYNPDNATIQSMTYEEVKDVEFMRDLAKSLGMTVEKFWTCGQLLEEIFGETAETQLMQPTFITGYPADISPLARRNDDNHFITDRFEFFIGGREVANGFSELNDAEDQDRRFKAQVDAKDAGDDEAMFYDADYITALEHGLPPTAGQGIGIDRLVMLFTNTHTIRDVILFPAMRPQAN.

Mg(2+) contacts are provided by glutamate 410 and glutamate 417.

The protein belongs to the class-II aminoacyl-tRNA synthetase family. In terms of assembly, homodimer. The cofactor is Mg(2+).

It is found in the cytoplasm. The catalysed reaction is tRNA(Lys) + L-lysine + ATP = L-lysyl-tRNA(Lys) + AMP + diphosphate. The sequence is that of Lysine--tRNA ligase from Shewanella halifaxensis (strain HAW-EB4).